The sequence spans 349 residues: Heme A synthase (349 aa).

The next 5 membrane-spanning stretches (helical) occupy residues 15 to 35 (AVQVWLYAVAALIVLMVVVGG), 101 to 121 (LLGRVIGLAFFLPFLYFALTG), 132 to 152 (FGLFLLGGLQGAVGWWMVASG), 162 to 182 (YRLAVHLTLACIILTAIVAVA), and 203 to 223 (VLVGLVLLQIFAGGLVAGLDA). Residue H265 coordinates heme. 3 consecutive transmembrane segments (helical) span residues 268-288 (IAYLIFALAFLHLLDCLRLGG), 296-316 (LVFALVAAQAMLGILTLVHMV), and 317-337 (PLDLALAHQLGATLVLIAAMI). H324 contacts heme.

It belongs to the COX15/CtaA family. Type 2 subfamily. As to quaternary structure, interacts with CtaB. It depends on heme b as a cofactor.

The protein resides in the cell membrane. It carries out the reaction Fe(II)-heme o + 2 A + H2O = Fe(II)-heme a + 2 AH2. It functions in the pathway porphyrin-containing compound metabolism; heme A biosynthesis; heme A from heme O: step 1/1. In terms of biological role, catalyzes the conversion of heme O to heme A by two successive hydroxylations of the methyl group at C8. The first hydroxylation forms heme I, the second hydroxylation results in an unstable dihydroxymethyl group, which spontaneously dehydrates, resulting in the formyl group of heme A. The protein is Heme A synthase of Azorhizobium caulinodans (strain ATCC 43989 / DSM 5975 / JCM 20966 / LMG 6465 / NBRC 14845 / NCIMB 13405 / ORS 571).